We begin with the raw amino-acid sequence, 662 residues long: Methyl-accepting chemotaxis protein McpB (662 aa).

Residues 1–16 (MKTFINWLKKPSISKK) are Cytoplasmic-facing. The helical transmembrane segment at 17–37 (LIVSFIAILIIPILILEFSSY) threads the bilayer. Topologically, residues 38 to 282 (RSASGKLDQE…IKDASKSVLT (245 aa)) are extracellular. The Cache domain occupies 153–229 (VTDPYVAASD…KAGEKLSGDW (77 aa)). The chain crosses the membrane as a helical span at residues 283–303 (TGMIVLIASIVAGGILILFIV). An HAMP domain is found at 304 to 356 (RSITKPLKRLVQSSKTISRGDLTETIEIHSKDELGELGESFNEMGQSLRSLIS). Residues 304 to 662 (RSITKPLKRL…RDLTKQFKIE (359 aa)) lie on the Cytoplasmic side of the membrane. A glutamate methyl ester (Gln) mark is found at Gln371 and Gln595. The Methyl-accepting transducer domain occupies 375–611 (SAGQTSKATE…HVSAAVSGIA (237 aa)). A glutamate methyl ester (Glu) mark is found at Glu630 and Glu637.

This sequence belongs to the methyl-accepting chemotaxis (MCP) protein family. Interacts with FloT. In terms of processing, some glutamine residues are deamidated to glutamate by CheD and subsequently methylated. Post-translationally, the demethylation is selective. Gln-371 is demethylated only upon asparagine addition whereas Glu-637 is demethylated only upon asparagine removal. Glu-630 appears indiscriminate and is demethylated upon both addition and removal of asparagine.

Its subcellular location is the cell membrane. It localises to the membrane raft. In terms of biological role, chemotactic-signal transducers respond to changes in the concentration of attractants and repellents in the environment, transduce a signal from the outside to the inside of the cell, and facilitate sensory adaptation through the variation of the level of methylation. All amino acids serve as attractants in B.subtilis, they appear to cause an increase in the turnover methyl groups, leading to methylation of an unidentified acceptor, while repellents have been shown to cause a decrease in methyl group turnover. The methyl groups are added by a methyltransferase and removed by a methylesterase. McpB is required for taxis towards asparagine, aspartate, glutamine, and histidine. In Bacillus subtilis (strain 168), this protein is Methyl-accepting chemotaxis protein McpB (mcpB).